A 215-amino-acid polypeptide reads, in one-letter code: MAVKLNATKREDLTKSATKQIRLSGRVPAVVYGKAKDPKNVSVDSVDLVKTVRDEGRNAIISLQVENSSVDVMLHDYQIDPIKDELLHADFYVVNMSEEMDVNVAVRLDGETKGEKEGGVLQQPFYEILVRAKPNNIPEEIVIDVSDLDVGDSVSVADIKVDGNYEILEDPDTSVASVTPPTTEEDLDTDDVDENAEPELVGAENDSADEESENK.

Residues 170–215 (DPDTSVASVTPPTTEEDLDTDDVDENAEPELVGAENDSADEESENK) form a disordered region. Composition is skewed to acidic residues over residues 183–197 (TEED…ENAE) and 206–215 (DSADEESENK).

The protein belongs to the bacterial ribosomal protein bL25 family. CTC subfamily. In terms of assembly, part of the 50S ribosomal subunit; part of the 5S rRNA/L5/L18/L25 subcomplex. Contacts the 5S rRNA. Binds to the 5S rRNA independently of L5 and L18.

Functionally, this is one of the proteins that binds to the 5S RNA in the ribosome where it forms part of the central protuberance. The polypeptide is Large ribosomal subunit protein bL25 (Oceanobacillus iheyensis (strain DSM 14371 / CIP 107618 / JCM 11309 / KCTC 3954 / HTE831)).